Reading from the N-terminus, the 504-residue chain is MGRFAATLVGSLFGLGLLLCGLGRLASAEPRAPPEKIAIVGAGIGGTSSAYYLRKKFGKDVKIDVFEREEIGGRLATLKVQGHDYEAGGSVIHPLNLHMKRFVKELGLSSVPASGGLVGVYNGKSLVFEESSWFIINVIKLVWRYGFQSLRMHMWVEDLLDKFMRIYRYQSHDYAFSSVEKLMYAIGGDDYVRLLNQTLRENLKKAGFSETFLNEMIAPVMKVNFGQSTDLNAFVGAVSMTAADSNLWAVEGGNKVVCSGLLQASNSNLISGSVMSIEKTRTKQTGTPPKMYEVVYKTGSEIHSDFYDIVLVAAPLNRKMSNITFRNFDPPIEEFNDPYQQLVTTLIKGELNSTLFSSRHKDQFGLSAILVTDDSDMFINSLSIVASVSHKEGPPPAVDGMHVWKTFSKDILTKEQISKLFLSYDYAVRKPWLSYPYYNPPQKCPSIILHDRLYYLNGIEFAASCMEMSAIAGYNAALLAYHRWNGNEDMIDQDDLYEKLKTEL.

The N-terminal stretch at 1–28 is a signal peptide; sequence MGRFAATLVGSLFGLGLLLCGLGRLASA. Residues Asn196, Asn322, and Asn352 are each glycosylated (N-linked (GlcNAc...) asparagine).

Belongs to the prenylcysteine oxidase family. FAD serves as cofactor. In terms of tissue distribution, expressed mainly in cerebrum.

Its subcellular location is the lysosome. It carries out the reaction an S-polyprenyl-L-cysteine + O2 + H2O = a polyprenal + L-cysteine + H2O2. The enzyme catalyses S-(2E,6E)-farnesyl-L-cysteine + O2 + H2O = (2E,6E)-farnesal + L-cysteine + H2O2. The catalysed reaction is [(2E,6E,10E)-geranylgeranyl]-L-cysteine + O2 + H2O = (2E,6E,10E)-geranylgeranial + L-cysteine + H2O2. Prenylcysteine oxidase that cleaves the thioether bond of prenyl-L-cysteines, such as farnesylcysteine and geranylgeranylcysteine. Only active against free prenylcysteines and not prenylcysteine residues within prenylated proteins or peptides. Involved in the final step in the degradation of prenylated proteins, by degrading prenylcysteines after the protein has been degraded. The sequence is that of Prenylcysteine oxidase 1 from Rattus norvegicus (Rat).